We begin with the raw amino-acid sequence, 359 residues long: WW domain-binding protein wbp-11 (359 aa).

Disordered regions lie at residues 1 to 38 (MPSI…DRQQ), 235 to 264 (PSSY…NPMG), and 317 to 341 (PGDN…QKQA). Residues 8-27 (KSGERYRAPTDQARKMDRKK) are compositionally biased toward basic and acidic residues. Positions 245 to 256 (MPHHHHHHHPHA) are enriched in basic residues.

In terms of biological role, activates pre-mRNA splicing. May inhibit PP1 phosphatase activity. This chain is WW domain-binding protein wbp-11, found in Caenorhabditis elegans.